The chain runs to 218 residues: Orotate phosphoribosyltransferase (218 aa).

Residue lysine 26 coordinates 5-phospho-alpha-D-ribose 1-diphosphate. 34 to 35 (FF) is an orotate binding site. 5-phospho-alpha-D-ribose 1-diphosphate is bound by residues 72–73 (YK), arginine 99, lysine 100, lysine 103, histidine 105, and 124–132 (DDVITAGTA). Threonine 128 and arginine 156 together coordinate orotate.

Belongs to the purine/pyrimidine phosphoribosyltransferase family. PyrE subfamily. As to quaternary structure, homodimer. It depends on Mg(2+) as a cofactor.

The enzyme catalyses orotidine 5'-phosphate + diphosphate = orotate + 5-phospho-alpha-D-ribose 1-diphosphate. It functions in the pathway pyrimidine metabolism; UMP biosynthesis via de novo pathway; UMP from orotate: step 1/2. Catalyzes the transfer of a ribosyl phosphate group from 5-phosphoribose 1-diphosphate to orotate, leading to the formation of orotidine monophosphate (OMP). The chain is Orotate phosphoribosyltransferase from Hamiltonella defensa subsp. Acyrthosiphon pisum (strain 5AT).